A 507-amino-acid polypeptide reads, in one-letter code: Glucose-6-phosphate 1-dehydrogenase (507 aa).

NADP(+)-binding residues include Arg-57 and Lys-168. Residues His-198, Lys-202, Glu-236, and Asp-255 each contribute to the substrate site. Catalysis depends on His-260, which acts as the Proton acceptor. Lys-356 lines the substrate pocket.

The protein belongs to the glucose-6-phosphate dehydrogenase family.

The catalysed reaction is D-glucose 6-phosphate + NADP(+) = 6-phospho-D-glucono-1,5-lactone + NADPH + H(+). It functions in the pathway carbohydrate degradation; pentose phosphate pathway; D-ribulose 5-phosphate from D-glucose 6-phosphate (oxidative stage): step 1/3. Catalyzes the oxidation of glucose 6-phosphate to 6-phosphogluconolactone. The protein is Glucose-6-phosphate 1-dehydrogenase of Chlamydia muridarum (strain MoPn / Nigg).